The following is a 577-amino-acid chain: Isocitrate dehydrogenase kinase/phosphatase (577 aa).

ATP-binding positions include 318-324 (APGVRGM) and Lys339. Asp374 is an active-site residue.

This sequence belongs to the AceK family.

The protein resides in the cytoplasm. It carries out the reaction L-seryl-[isocitrate dehydrogenase] + ATP = O-phospho-L-seryl-[isocitrate dehydrogenase] + ADP + H(+). In terms of biological role, bifunctional enzyme which can phosphorylate or dephosphorylate isocitrate dehydrogenase (IDH) on a specific serine residue. This is a regulatory mechanism which enables bacteria to bypass the Krebs cycle via the glyoxylate shunt in response to the source of carbon. When bacteria are grown on glucose, IDH is fully active and unphosphorylated, but when grown on acetate or ethanol, the activity of IDH declines drastically concomitant with its phosphorylation. The chain is Isocitrate dehydrogenase kinase/phosphatase from Pseudomonas aeruginosa (strain UCBPP-PA14).